We begin with the raw amino-acid sequence, 320 residues long: Nicotianamine synthase 1 (320 aa).

It belongs to the nicotianamine synthase (NAS)-like family. In shoots and roots.

The enzyme catalyses 3 S-adenosyl-L-methionine = nicotianamine + 3 S-methyl-5'-thioadenosine + 3 H(+). Its function is as follows. Synthesizes nicotianamine, a polyamine which serves as a sensor for the physiological iron status within the plant, and/or might be involved in the transport of iron. The polypeptide is Nicotianamine synthase 1 (NAS1) (Arabidopsis thaliana (Mouse-ear cress)).